A 69-amino-acid chain; its full sequence is Sec-independent protein translocase protein TatA (69 aa).

A helical transmembrane segment spans residues 1–21 (MFPKLGMGELVVILLIVVILF). The tract at residues 43 to 69 (SFSGEDEEKPSTPGATSSDEASKAKQA) is disordered.

This sequence belongs to the TatA/E family. The Tat system comprises two distinct complexes: a TatABC complex, containing multiple copies of TatA, TatB and TatC subunits, and a separate TatA complex, containing only TatA subunits. Substrates initially bind to the TatABC complex, which probably triggers association of the separate TatA complex to form the active translocon.

Its subcellular location is the cell inner membrane. Functionally, part of the twin-arginine translocation (Tat) system that transports large folded proteins containing a characteristic twin-arginine motif in their signal peptide across membranes. TatA could form the protein-conducting channel of the Tat system. This chain is Sec-independent protein translocase protein TatA, found in Anaeromyxobacter sp. (strain Fw109-5).